Here is a 525-residue protein sequence, read N- to C-terminus: uncharacterized protein (525 aa).

The N-terminal stretch at 1-21 is a signal peptide; it reads MLECLSALLVLFAGGGGSVLA. At 22 to 448 the chain is on the extracellular side; that stretch reads AVQSKTVADP…ISAASQLDER (427 aa). A disordered region spans residues 242 to 264; it reads KVSSENCSKDTDDKSGSKKERNT. A helical membrane pass occupies residues 449-469; the sequence is IFIFTAITVSITTLMMLGFSY. The Cytoplasmic segment spans residues 470 to 525; sequence RSRVSFRDHSIDDSDDDNDWSDDEVEFDEEYFYSLPVSIPEKGISLDKMAQQLGVE.

It localises to the membrane. This is an uncharacterized protein from Saccharomyces cerevisiae (strain RM11-1a) (Baker's yeast).